We begin with the raw amino-acid sequence, 511 residues long: Histidine ammonia-lyase (511 aa).

The segment at residues 142-144 (ASG) is a cross-link (5-imidazolinone (Ala-Gly)). Ser-143 carries the post-translational modification 2,3-didehydroalanine (Ser).

It belongs to the PAL/histidase family. Post-translationally, contains an active site 4-methylidene-imidazol-5-one (MIO), which is formed autocatalytically by cyclization and dehydration of residues Ala-Ser-Gly.

The protein resides in the cytoplasm. It catalyses the reaction L-histidine = trans-urocanate + NH4(+). It functions in the pathway amino-acid degradation; L-histidine degradation into L-glutamate; N-formimidoyl-L-glutamate from L-histidine: step 1/3. This Rhizobium rhizogenes (Agrobacterium rhizogenes) protein is Histidine ammonia-lyase.